We begin with the raw amino-acid sequence, 293 residues long: Glutamyl-Q tRNA(Asp) synthetase (293 aa).

L-glutamate-binding positions include 9–13 (RFAPS) and Glu-45. The short motif at 12–22 (PSPSGELHFGS) is the 'HIGH' region element. Cys-101, Cys-103, Tyr-115, and Cys-119 together coordinate Zn(2+). L-glutamate-binding residues include Tyr-172 and Arg-190. The 'KMSKS' region signature appears at 228 to 232 (KLSKQ). Lys-231 contacts ATP.

Belongs to the class-I aminoacyl-tRNA synthetase family. GluQ subfamily. Requires Zn(2+) as cofactor.

In terms of biological role, catalyzes the tRNA-independent activation of glutamate in presence of ATP and the subsequent transfer of glutamate onto a tRNA(Asp). Glutamate is transferred on the 2-amino-5-(4,5-dihydroxy-2-cyclopenten-1-yl) moiety of the queuosine in the wobble position of the QUC anticodon. This is Glutamyl-Q tRNA(Asp) synthetase from Klebsiella pneumoniae (strain 342).